Reading from the N-terminus, the 151-residue chain is Large ribosomal subunit protein uL13 (151 aa).

The protein belongs to the universal ribosomal protein uL13 family. As to quaternary structure, part of the 50S ribosomal subunit.

Functionally, this protein is one of the early assembly proteins of the 50S ribosomal subunit, although it is not seen to bind rRNA by itself. It is important during the early stages of 50S assembly. This chain is Large ribosomal subunit protein uL13, found in Picosynechococcus sp. (strain ATCC 27264 / PCC 7002 / PR-6) (Agmenellum quadruplicatum).